We begin with the raw amino-acid sequence, 374 residues long: Ribosomal RNA large subunit methyltransferase G (374 aa).

This sequence belongs to the methyltransferase superfamily. RlmG family.

The protein resides in the cytoplasm. It carries out the reaction guanosine(1835) in 23S rRNA + S-adenosyl-L-methionine = N(2)-methylguanosine(1835) in 23S rRNA + S-adenosyl-L-homocysteine + H(+). In terms of biological role, specifically methylates the guanine in position 1835 (m2G1835) of 23S rRNA. The polypeptide is Ribosomal RNA large subunit methyltransferase G (Ectopseudomonas mendocina (strain ymp) (Pseudomonas mendocina)).